The primary structure comprises 548 residues: Probable aquaglyceroporin-4 (548 aa).

Positions 1-22 (MAGTQDQSQDYFSKPTTPSTPG) are enriched in polar residues. Disordered regions lie at residues 1 to 63 (MAGT…LPST), 76 to 101 (SRGF…SHFH), and 158 to 270 (KEET…ESGD). Topologically, residues 1–290 (MAGTQDQSQD…ARLRARHPEP (290 aa)) are cytoplasmic. A compositionally biased stretch (basic and acidic residues) spans 38–48 (PDRESGTERAK). 2 stretches are compositionally biased toward polar residues: residues 77–97 (RGFS…PQHS) and 171–200 (SRTT…SRTT). Residues 249–265 (PDFKVDGEPLGHQEKPC) are compositionally biased toward basic and acidic residues. A helical transmembrane segment spans residues 291–311 (LAEFLATAVAIFLGLTGTLSV). Residue Asn312 is glycosylated (N-linked (GlcNAc...) asparagine). The Extracellular segment spans residues 312–327 (NLSATQSQPYGTYETS). Residues 328-348 (CWAWGFAWMFGIYLGGGVSGA) traverse the membrane as a helical segment. Over 349-369 (HMNPAISVSLSIFRGFPWRQC) the chain is Cytoplasmic. Residues 351 to 353 (NPA) carry the NPA 1 motif. A helical membrane pass occupies residues 370 to 390 (VIYVFVQFIASIVAGALAYAM). Over 391 to 420 (YADSINHVDPDMTKMSMTFFSTPREWVTLK) the chain is Extracellular. Residues 421 to 441 (SAFFNQVVGSAIMMIAVFALG) traverse the membrane as a helical segment. Over 442–448 (DDQNNPP) the chain is Cytoplasmic. A helical membrane pass occupies residues 449-469 (GAGMHALVLGFLVTTLKFTLG). Residues 470 to 508 (YNIGSALNPASDFGPRVIAYAVGFRGDNVFHSGWWFYGP) lie on the Extracellular side of the membrane. The short motif at 477 to 479 (NPA) is the NPA 2 element. The chain crosses the membrane as a helical span at residues 509 to 529 (WAATLIGSLLGCTLYDGFVFV). The Cytoplasmic portion of the chain corresponds to 530–548 (GSESPVNFRVDKRVKKLFN).

It belongs to the MIP/aquaporin (TC 1.A.8) family.

The protein localises to the membrane. It catalyses the reaction H2O(in) = H2O(out). It carries out the reaction glycerol(in) = glycerol(out). Functionally, probable water/glycerol channel that may have redundant functions with FgAQP2. This chain is Probable aquaglyceroporin-4, found in Gibberella zeae (strain ATCC MYA-4620 / CBS 123657 / FGSC 9075 / NRRL 31084 / PH-1) (Wheat head blight fungus).